The primary structure comprises 80 residues: Small ribosomal subunit protein bS18 (80 aa).

This sequence belongs to the bacterial ribosomal protein bS18 family. As to quaternary structure, part of the 30S ribosomal subunit. Forms a tight heterodimer with protein bS6.

Binds as a heterodimer with protein bS6 to the central domain of the 16S rRNA, where it helps stabilize the platform of the 30S subunit. The sequence is that of Small ribosomal subunit protein bS18 from Beijerinckia indica subsp. indica (strain ATCC 9039 / DSM 1715 / NCIMB 8712).